An 803-amino-acid chain; its full sequence is Volume-regulated anion channel subunit LRRC8C (803 aa).

Topologically, residues 1–22 (MIPVTEFRQFSEQQPAFRVLKP) are cytoplasmic. Residues 23-43 (WWDVFTDYLSVAMLMIGVFGC) traverse the membrane as a helical segment. Residues 44–125 (TLQVMQDKII…YERALHWYAK (82 aa)) lie on the Extracellular side of the membrane. 2 disulfide bridges follow: Cys54-Cys308 and Cys115-Cys293. Asn64 and Asn70 each carry an N-linked (GlcNAc...) asparagine glycan. A helical transmembrane segment spans residues 126–146 (YFPYLVLIHTLVFMLCSNFWF). The Cytoplasmic segment spans residues 147-266 (KFPGSSSKIE…ILYAMYVRQT (120 aa)). The interval 177-209 (EVSGEDSEEKDNRKNNMSRSNTTQSGPEGSLVN) is disordered. Over residues 191–209 (NNMSRSNTTQSGPEGSLVN) the composition is skewed to polar residues. Residues Ser212 and Ser215 each carry the phosphoserine modification. A helical membrane pass occupies residues 267 to 287 (VLKVIKFLIIIAYNSALVSKV). Topologically, residues 288-320 (QFTVDCNVDIQDMTGYKNFSCNHTMAHLFSKLS) are extracellular. The chain crosses the membrane as a helical span at residues 321–341 (FCYLCFVSIYGLTCLYTLYWL). Over 342–803 (FYRSLKEYSF…SDVREQMKTE (462 aa)) the chain is Cytoplasmic. 17 LRR repeats span residues 397-419 (ENKLKQLNLNNEWTPDKLRQKLQ), 420-443 (TNAHNRLELPLIMLSGLPDTVFEI), 446-465 (LQSLKLEIIKNVMIPATIAQ), 468-490 (NLQELSLHQCSVKIHSAALSFLK), 492-513 (NLKVLSVKFDDMRELPPWMYGL), 515-536 (NLEELYLVGSLSHDISRNVTLE), 543-563 (SLKILSIKSNVSKIPQAVVDV), 566-586 (HLQKMCIHNDGTKLVMLNNLK), 590-611 (NLTELELVHCDLERIPHAVFSL), 613-634 (SLQELDLKENNLKSIEEIVSFQ), 638-659 (KLTVLKLWHNSITYIPEHIKKL), 661-682 (SLERLSFSHNKIEVLPSHLFLC), 684-705 (KIRYLDLSYNDIRFIPPEIGVL), 707-728 (SLQYFSITCNKVESLPDELYFC), 730-751 (KLKTLKIGKNSLSVLSPKIGNL), 753-774 (FLSYLDVKGNHFEILPPELGDC), and 776-799 (ALKRAGLVVEDALFETLPSDVREQ).

This sequence belongs to the LRRC8 family. Heterohexamer; oligomerizes with other LRRC8 proteins (LRRC8A, LRRC8B, LRRC8D and/or LRRC8E) to form a heterohexamer. Homoheptamer; inactive, likely because it is not targeted to the plasma membrane in the absence of LRRC8A. In vivo, the subunit composition may depend primarily on expression levels, and heterooligomeric channels containing various proportions of the different LRRC8 proteins may coexist.

The protein resides in the cell membrane. It is found in the endoplasmic reticulum membrane. The catalysed reaction is chloride(in) = chloride(out). It carries out the reaction iodide(out) = iodide(in). It catalyses the reaction taurine(out) = taurine(in). The enzyme catalyses 2',3'-cGAMP(out) = 2',3'-cGAMP(in). Its function is as follows. Non-essential component of the volume-regulated anion channel (VRAC, also named VSOAC channel), an anion channel required to maintain a constant cell volume in response to extracellular or intracellular osmotic changes. The VRAC channel conducts iodide better than chloride and can also conduct organic osmolytes like taurine. Plays a redundant role in the efflux of amino acids, such as aspartate and glutamate, in response to osmotic stress. The VRAC channel also mediates transport of immunoreactive cyclic dinucleotide GMP-AMP (2'-3'-cGAMP), an immune messenger produced in response to DNA virus in the cytosol. Channel activity requires LRRC8A plus at least one other family member (LRRC8B, LRRC8C, LRRC8D or LRRC8E); channel characteristics depend on the precise subunit composition. This Bos taurus (Bovine) protein is Volume-regulated anion channel subunit LRRC8C.